Here is a 337-residue protein sequence, read N- to C-terminus: Phenylalanine--tRNA ligase alpha subunit (337 aa).

E252 lines the Mg(2+) pocket.

Belongs to the class-II aminoacyl-tRNA synthetase family. Phe-tRNA synthetase alpha subunit type 1 subfamily. Tetramer of two alpha and two beta subunits. Requires Mg(2+) as cofactor.

The protein localises to the cytoplasm. It carries out the reaction tRNA(Phe) + L-phenylalanine + ATP = L-phenylalanyl-tRNA(Phe) + AMP + diphosphate + H(+). This Francisella tularensis subsp. novicida (strain U112) protein is Phenylalanine--tRNA ligase alpha subunit.